The following is a 452-amino-acid chain: Bifunctional protein GlmU (452 aa).

Positions 1–218 are pyrophosphorylase; it reads MKVLILAAGL…IVEVSGVNDR (218 aa). UDP-N-acetyl-alpha-D-glucosamine-binding positions include 6–9, Lys20, Gln68, 73–74, 95–97, Gly134, Glu147, Asn162, and Asn216; these read LAAG, GT, and YGD. Asp97 is a Mg(2+) binding site. Asn216 is a Mg(2+) binding site. The segment at 219–239 is linker; sequence IQLAQLETIAKQRILEKLMLS. Residues 240 to 452 are N-acetyltransferase; it reads GVTIVDPNST…EELKNADHKE (213 aa). 2 residues coordinate UDP-N-acetyl-alpha-D-glucosamine: Arg321 and Lys339. His351 serves as the catalytic Proton acceptor. UDP-N-acetyl-alpha-D-glucosamine-binding residues include Tyr354 and Asn365. Residues Ala368, 374–375, Ser393, Ala411, and Arg428 contribute to the acetyl-CoA site; that span reads NY.

The protein in the N-terminal section; belongs to the N-acetylglucosamine-1-phosphate uridyltransferase family. In the C-terminal section; belongs to the transferase hexapeptide repeat family. In terms of assembly, homotrimer. Requires Mg(2+) as cofactor.

Its subcellular location is the cytoplasm. The enzyme catalyses alpha-D-glucosamine 1-phosphate + acetyl-CoA = N-acetyl-alpha-D-glucosamine 1-phosphate + CoA + H(+). It carries out the reaction N-acetyl-alpha-D-glucosamine 1-phosphate + UTP + H(+) = UDP-N-acetyl-alpha-D-glucosamine + diphosphate. It functions in the pathway nucleotide-sugar biosynthesis; UDP-N-acetyl-alpha-D-glucosamine biosynthesis; N-acetyl-alpha-D-glucosamine 1-phosphate from alpha-D-glucosamine 6-phosphate (route II): step 2/2. Its pathway is nucleotide-sugar biosynthesis; UDP-N-acetyl-alpha-D-glucosamine biosynthesis; UDP-N-acetyl-alpha-D-glucosamine from N-acetyl-alpha-D-glucosamine 1-phosphate: step 1/1. It participates in bacterial outer membrane biogenesis; LPS lipid A biosynthesis. Catalyzes the last two sequential reactions in the de novo biosynthetic pathway for UDP-N-acetylglucosamine (UDP-GlcNAc). The C-terminal domain catalyzes the transfer of acetyl group from acetyl coenzyme A to glucosamine-1-phosphate (GlcN-1-P) to produce N-acetylglucosamine-1-phosphate (GlcNAc-1-P), which is converted into UDP-GlcNAc by the transfer of uridine 5-monophosphate (from uridine 5-triphosphate), a reaction catalyzed by the N-terminal domain. The chain is Bifunctional protein GlmU from Fervidobacterium nodosum (strain ATCC 35602 / DSM 5306 / Rt17-B1).